A 113-amino-acid chain; its full sequence is DNA-directed RNA polymerase subunit Rpo4 (113 aa).

The protein belongs to the eukaryotic RPB4 RNA polymerase subunit family. In terms of assembly, part of the 13-subunit RNA polymerase complex. Forms a stalk with Rpo7 that extends from the main structure.

Its subcellular location is the cytoplasm. The catalysed reaction is RNA(n) + a ribonucleoside 5'-triphosphate = RNA(n+1) + diphosphate. Its function is as follows. DNA-dependent RNA polymerase (RNAP) catalyzes the transcription of DNA into RNA using the four ribonucleoside triphosphates as substrates. This subunit is less well bound than the others. This is DNA-directed RNA polymerase subunit Rpo4 from Saccharolobus solfataricus (strain ATCC 35092 / DSM 1617 / JCM 11322 / P2) (Sulfolobus solfataricus).